Consider the following 233-residue polypeptide: 2,3,4,5-tetrahydropyridine-2,6-dicarboxylate N-acetyltransferase (233 aa).

Belongs to the transferase hexapeptide repeat family. DapH subfamily.

The catalysed reaction is (S)-2,3,4,5-tetrahydrodipicolinate + acetyl-CoA + H2O = L-2-acetamido-6-oxoheptanedioate + CoA. Its pathway is amino-acid biosynthesis; L-lysine biosynthesis via DAP pathway; LL-2,6-diaminopimelate from (S)-tetrahydrodipicolinate (acetylase route): step 1/3. In terms of biological role, catalyzes the transfer of an acetyl group from acetyl-CoA to tetrahydrodipicolinate. This chain is 2,3,4,5-tetrahydropyridine-2,6-dicarboxylate N-acetyltransferase, found in Thermotoga sp. (strain RQ2).